A 473-amino-acid polypeptide reads, in one-letter code: Phosphatidylserine synthase 1 (473 aa).

Position 2 is an N-acetylalanine (A2). Residues 2-35 are Cytoplasmic-facing; it reads ASCVGSRTLSKDDVNYRMHFRMINEQQVEDITID. The chain crosses the membrane as a helical span at residues 36-56; sequence FFYRPHTITLLSFTIISLMYF. The Lumenal segment spans residues 57–72; it reads AFTRDDCVPEDNIWRG. The helical transmembrane segment at 73–93 threads the bilayer; that stretch reads ILSVIFFFLIISVLAFPNGPF. Topologically, residues 94 to 102 are cytoplasmic; the sequence is TRPHPALWR. Residues 103-123 traverse the membrane as a helical segment; sequence MVFGLSVLYFLFLVFLLFLNF. Over 124 to 186 the chain is Lumenal; the sequence is EQVKSLMYWL…AMKALLIRSY (63 aa). A helical membrane pass occupies residues 187-207; that stretch reads GLCWTISITWELTELFFMHLL. Residues 208 to 216 are Cytoplasmic-facing; that stretch reads PNFAECWWD. A helical membrane pass occupies residues 217-237; sequence QVILDILLCNGGGIWLGMVVC. The Lumenal portion of the chain corresponds to 238 to 286; it reads RFLEMRTYHWASFKDIHTTTGKIKRAVLQFTPASWTYVRWFDPKSSFQR. A helical membrane pass occupies residues 287-307; the sequence is VAGIYLFMIIWQLTELNTFFL. Residues 308–319 are Cytoplasmic-facing; it reads KHIFVFQASHPL. A helical transmembrane segment spans residues 320–342; sequence SWCRILFIGCITAPTVRQYYAYL. The Lumenal segment spans residues 343–355; sequence TDTQCKRVGTQCW. A helical membrane pass occupies residues 356–376; the sequence is VFGVIGFLEAIVCIKFGQDLF. Over 377–383 the chain is Cytoplasmic; that stretch reads SKTQILY. Residues 384 to 404 form a helical membrane-spanning segment; it reads VVLWLLCVAFTTFLCLYGMVW. Residues 405-473 lie on the Lumenal side of the membrane; it reads YAEHYGHREK…SKVTNGVGKK (69 aa). A phosphoserine mark is found at S417, S425, S442, and S454. Residues 430 to 473 form a disordered region; the sequence is WYHGKGSKGSEDSPPKHSNNNESHSSRRRNRHSKSKVTNGVGKK. A compositionally biased stretch (basic residues) spans 455–464; it reads SRRRNRHSKS.

Belongs to the phosphatidyl serine synthase family.

It localises to the endoplasmic reticulum membrane. It carries out the reaction a 1,2-diacyl-sn-glycero-3-phosphoethanolamine + L-serine = a 1,2-diacyl-sn-glycero-3-phospho-L-serine + ethanolamine. It catalyses the reaction a 1,2-diacyl-sn-glycero-3-phosphocholine + L-serine = a 1,2-diacyl-sn-glycero-3-phospho-L-serine + choline. The protein operates within phospholipid metabolism; phosphatidylserine biosynthesis. Functionally, catalyzes a base-exchange reaction in which the polar head group of phosphatidylethanolamine (PE) or phosphatidylcholine (PC) is replaced by L-serine. Catalyzes mainly the conversion of phosphatidylcholine but also converts, in vitro and to a lesser extent, phosphatidylethanolamine. This chain is Phosphatidylserine synthase 1 (Ptdss1), found in Rattus norvegicus (Rat).